The primary structure comprises 140 residues: Large ribosomal subunit protein uL16 (140 aa).

Belongs to the universal ribosomal protein uL16 family. Part of the 50S ribosomal subunit.

In terms of biological role, binds 23S rRNA and is also seen to make contacts with the A and possibly P site tRNAs. This is Large ribosomal subunit protein uL16 from Phytoplasma mali (strain AT).